We begin with the raw amino-acid sequence, 213 residues long: Glycerol-3-phosphate acyltransferase (213 aa).

Helical transmembrane passes span 2-22 (ITIV…GLWI), 52-74 (AGMA…PIIF), 81-100 (PLIF…FAGF), 112-132 (VIFG…FGAL), 143-163 (VTAS…GFIL), and 164-184 (SNYD…IIIR).

This sequence belongs to the PlsY family. Probably interacts with PlsX.

The protein resides in the cell membrane. It catalyses the reaction an acyl phosphate + sn-glycerol 3-phosphate = a 1-acyl-sn-glycero-3-phosphate + phosphate. It participates in lipid metabolism; phospholipid metabolism. In terms of biological role, catalyzes the transfer of an acyl group from acyl-phosphate (acyl-PO(4)) to glycerol-3-phosphate (G3P) to form lysophosphatidic acid (LPA). This enzyme utilizes acyl-phosphate as fatty acyl donor, but not acyl-CoA or acyl-ACP. This is Glycerol-3-phosphate acyltransferase from Streptococcus pneumoniae (strain CGSP14).